We begin with the raw amino-acid sequence, 96 residues long: Integration host factor subunit beta (96 aa).

The disordered stretch occupies residues 59–86; the sequence is RVGRNPKTGETVELDGKHVPHFKPGKEL. A compositionally biased stretch (basic and acidic residues) spans 72–86; sequence LDGKHVPHFKPGKEL.

Belongs to the bacterial histone-like protein family. In terms of assembly, heterodimer of an alpha and a beta chain.

In terms of biological role, this protein is one of the two subunits of integration host factor, a specific DNA-binding protein that functions in genetic recombination as well as in transcriptional and translational control. The polypeptide is Integration host factor subunit beta (Pseudoalteromonas atlantica (strain T6c / ATCC BAA-1087)).